Here is a 419-residue protein sequence, read N- to C-terminus: UPF0229 protein TERTU_3150 (419 aa).

The interval 63 to 111 is disordered; the sequence is IFHHGSGGKNNRVLPGNDRFNGGDHIERPEQGQGGGGNGSGASDSGEGE. The segment covering 83-92 has biased composition (basic and acidic residues); the sequence is NGGDHIERPE.

Belongs to the UPF0229 family.

This Teredinibacter turnerae (strain ATCC 39867 / T7901) protein is UPF0229 protein TERTU_3150.